We begin with the raw amino-acid sequence, 61 residues long: Large ribosomal subunit protein bL28 (61 aa).

The disordered stretch occupies residues 1–26; sequence MAKDYVTGKRTHFGNTRSHALNHSRR.

The protein belongs to the bacterial ribosomal protein bL28 family.

In Lactiplantibacillus plantarum (strain ATCC BAA-793 / NCIMB 8826 / WCFS1) (Lactobacillus plantarum), this protein is Large ribosomal subunit protein bL28.